The primary structure comprises 214 residues: ATP-dependent Clp protease proteolytic subunit 3 (214 aa).

Ser106 (nucleophile) is an active-site residue. Residue His131 is part of the active site.

The protein belongs to the peptidase S14 family. As to quaternary structure, fourteen ClpP subunits assemble into 2 heptameric rings which stack back to back to give a disk-like structure with a central cavity, resembling the structure of eukaryotic proteasomes.

It is found in the cytoplasm. The enzyme catalyses Hydrolysis of proteins to small peptides in the presence of ATP and magnesium. alpha-casein is the usual test substrate. In the absence of ATP, only oligopeptides shorter than five residues are hydrolyzed (such as succinyl-Leu-Tyr-|-NHMec, and Leu-Tyr-Leu-|-Tyr-Trp, in which cleavage of the -Tyr-|-Leu- and -Tyr-|-Trp bonds also occurs).. Cleaves peptides in various proteins in a process that requires ATP hydrolysis. Has a chymotrypsin-like activity. Plays a major role in the degradation of misfolded proteins. This chain is ATP-dependent Clp protease proteolytic subunit 3, found in Trichormus variabilis (strain ATCC 29413 / PCC 7937) (Anabaena variabilis).